The sequence spans 372 residues: Putative glutamate--cysteine ligase 2 (372 aa).

Belongs to the glutamate--cysteine ligase type 2 family. YbdK subfamily. Homodimer.

The catalysed reaction is L-cysteine + L-glutamate + ATP = gamma-L-glutamyl-L-cysteine + ADP + phosphate + H(+). In terms of biological role, ATP-dependent carboxylate-amine ligase which exhibits weak glutamate--cysteine ligase activity. This is Putative glutamate--cysteine ligase 2 (ybdK) from Escherichia coli O17:K52:H18 (strain UMN026 / ExPEC).